Consider the following 190-residue polypeptide: Probable nicotinate-nucleotide adenylyltransferase (190 aa).

This sequence belongs to the NadD family.

It catalyses the reaction nicotinate beta-D-ribonucleotide + ATP + H(+) = deamido-NAD(+) + diphosphate. It participates in cofactor biosynthesis; NAD(+) biosynthesis; deamido-NAD(+) from nicotinate D-ribonucleotide: step 1/1. Functionally, catalyzes the reversible adenylation of nicotinate mononucleotide (NaMN) to nicotinic acid adenine dinucleotide (NaAD). This Frankia casuarinae (strain DSM 45818 / CECT 9043 / HFP020203 / CcI3) protein is Probable nicotinate-nucleotide adenylyltransferase.